The chain runs to 126 residues: Small ribosomal subunit protein uS13 (126 aa).

The disordered stretch occupies residues 98-126 (PVRGQSTKNNARTRKGRKKTVANKKKATK). Residues 108–126 (ARTRKGRKKTVANKKKATK) show a composition bias toward basic residues.

This sequence belongs to the universal ribosomal protein uS13 family. In terms of assembly, part of the 30S ribosomal subunit. Forms a loose heterodimer with protein S19. Forms two bridges to the 50S subunit in the 70S ribosome.

Its function is as follows. Located at the top of the head of the 30S subunit, it contacts several helices of the 16S rRNA. In the 70S ribosome it contacts the 23S rRNA (bridge B1a) and protein L5 of the 50S subunit (bridge B1b), connecting the 2 subunits; these bridges are implicated in subunit movement. Contacts the tRNAs in the A and P-sites. The chain is Small ribosomal subunit protein uS13 from Bacteroides fragilis (strain ATCC 25285 / DSM 2151 / CCUG 4856 / JCM 11019 / LMG 10263 / NCTC 9343 / Onslow / VPI 2553 / EN-2).